Here is a 212-residue protein sequence, read N- to C-terminus: Adenylate kinase (212 aa).

10–15 (GAGKGT) is a binding site for ATP. The segment at 30–59 (ALGDIFRTIIKTSTSEAELINNYVKQGELV) is NMP. Residues R36, 57-59 (ELV), 85-88 (GYPR), and Q92 contribute to the AMP site. Residues 122–160 (GRYSCKNCRKIYNSYFLQPKTDNVCDVCGSSTFDYRKDD) are LID. Residue R123 coordinates ATP. C126 and C129 together coordinate Zn(2+). ATP is bound at residue 132–133 (IY). Zn(2+)-binding residues include C146 and C149. AMP contacts are provided by R157 and R168. An ATP-binding site is contributed by K196.

Belongs to the adenylate kinase family. In terms of assembly, monomer.

It localises to the cytoplasm. It catalyses the reaction AMP + ATP = 2 ADP. Its pathway is purine metabolism; AMP biosynthesis via salvage pathway; AMP from ADP: step 1/1. Functionally, catalyzes the reversible transfer of the terminal phosphate group between ATP and AMP. Plays an important role in cellular energy homeostasis and in adenine nucleotide metabolism. The sequence is that of Adenylate kinase from Rickettsia akari (strain Hartford).